The chain runs to 314 residues: Olfactory receptor 52H1 (314 aa).

The Extracellular portion of the chain corresponds to 1-32 (MIIFNLSSYNPGPFILVGIPGLEQFHVWIGIP). A glycan (N-linked (GlcNAc...) asparagine) is linked at Asn5. The chain crosses the membrane as a helical span at residues 33 to 53 (FCIIYIVAVVGNCILLYLIVV). The Cytoplasmic segment spans residues 54–59 (EHSLHE). A helical membrane pass occupies residues 60–80 (PMFFFLSMLAMTDLILSTAGV). Topologically, residues 81–101 (PKALSIFWLGAREITFPGCLT) are extracellular. Cys99 and Cys181 are joined by a disulfide. The chain crosses the membrane as a helical span at residues 102-122 (QMFFLHYNFVLDSAILMAMAF). Residues 123–149 (DHYVAICSPLRYTTILTPKTIIKSAMG) are Cytoplasmic-facing. The chain crosses the membrane as a helical span at residues 150–170 (ISFRSFCIILPDVFLLTCLPF). Over 171-197 (CRTRIIPHTYCEHIGVAQLACADISIN) the chain is Extracellular. Residues 198 to 218 (FWYGFCVPIMTVISDVILIAV) traverse the membrane as a helical segment. Topologically, residues 219 to 242 (SYAHILCAVFGLPSQDACQKALGT) are cytoplasmic. Residues 243-263 (CGSHVCVILMFYTPAFFSILA) traverse the membrane as a helical segment. The Extracellular segment spans residues 264–275 (HRFGHNVSRTFH). Asn269 is a glycosylation site (N-linked (GlcNAc...) asparagine). The chain crosses the membrane as a helical span at residues 276-296 (IMFANLYIVIPPALNPMVYGV). Residues 297–314 (KTKQIRDKVILLFSKGTG) lie on the Cytoplasmic side of the membrane.

It belongs to the G-protein coupled receptor 1 family.

It localises to the membrane. Functionally, odorant receptor. In Homo sapiens (Human), this protein is Olfactory receptor 52H1 (OR52H1).